We begin with the raw amino-acid sequence, 510 residues long: MALLSVLPVSLWLIAAGTFAVYHAIRAVYLIFFSPLAVFPGSPWAALGEYWEAYWNIGVKPGRKGQMLFKLEEMHKRLGPALRMGPNEVHIYDPAFYHELYRPGSRYYKDPSMHKVLGAPSSTLAESDPVRHKQRKAPLEPLFSKKNILSLEPMLMEHVDRCSQRFDELFAQGKPVSMEWALKSLAMDMVSQFAFGQSLNALADPEFKSLPVRVFQQYLPSLHVIKAFPFVRLLNSLPLWIAKRISHSVEMGHELEQFAARRIDEYMAAAAAGKTPTFPTLMERLLIPIPEKGYAVPDKQGLRDELLTVISAGDDTTGIANTVTLFNIFNNREVHDRLLAELKTVMPTPNSHVSYLQLEALPYLTAVIKEGLRYSSPAASRTPRLVPPGGVRLPDGRFIPAGTRVGMAIYHIHYNETLFESPRVFDPERWLQGPEVTAERAKFLVPFSRGSRSCLGINLAYMEMYMAIAYIVRRFDLDLVGTTEEDMKWDDMVVPQFHGEFMALTKRRED.

Residues 7–29 (LPVSLWLIAAGTFAVYHAIRAVY) form a helical membrane-spanning segment. A heme-binding site is contributed by cysteine 454.

Belongs to the cytochrome P450 family. Heme serves as cofactor.

The protein resides in the membrane. The protein operates within secondary metabolite biosynthesis; terpenoid biosynthesis. Its function is as follows. Cytochrome P450 monooxygenase; part of the gene cluster that mediates the biosynthesis of macrophorins, isoprenoid epoxycyclohexenones containing cyclized drimane moieties. The first step of the pathway is the synthesis of 6-methylsalicylic acid (6-MSA) by the polyketide synthase macA. 6-MSA is then converted to m-cresol by the decarboxylase macB. The cytochrome P450 monooxygenase macC then catalyzes the oxidation of m-cresol to toluquinol. Epoxidation of toluquinol is then performed by the short chain dehydrogenase macD, with the help of macE, and a further prenylation by macG leads to 7-deacetoxyyanuthone A. The next step is the hydroxylation of C-22 of 7-deacetoxyyanuthone A by the cytochrome P450 monooxygenase macH to yield 22-deacetylyanuthone A. O-Mevalon transferase macI then attaches mevalon to the hydroxyl group of 22-deacetylyanuthone A to produce yanuthone E. The terpene cyclase macJ catalyzes the cyclization of 22-deacetylyanuthone A to macrophorin A. MacJ is also able to catalyze cyclization of yanuthone E and 7-deacetoxyyanuthone A to their corresponding macrophorins. The macJ products can be further modified by macH and macJ, as well as by the FAD-dependent monooxygenase macF, to produce additional macrophorins, including 4'-oxomacrophorin A, 4'-oxomacrophorin D and 4'-oxomacrophorin E. This chain is Cytochrome P450 monooxygenase macH, found in Penicillium terrestre.